A 181-amino-acid polypeptide reads, in one-letter code: MRLVLLGPPGAGKGTQAQLLSDALNIPHISTGDLFRANISQGTELGKQAQEYMDAGKLVPTEVTANMVRARLEEADAANGFLLDGFPRTIEQADLLEEMLKEKDLKLDAVINYQVSEDVVVERMLSRGRNDDNESTIRTRLQVYREETAPLIDYYQGRILNIDAEGSVEDISEATLCALDK.

10-15 (GAGKGT) is a binding site for ATP. Positions 30–59 (STGDLFRANISQGTELGKQAQEYMDAGKLV) are NMP. Residues T31, R36, 57–59 (KLV), 85–88 (GFPR), and Q92 each bind AMP. An LID region spans residues 126–132 (SRGRNDD). R127 is an ATP binding site. AMP is bound by residues R129 and R140. G166 provides a ligand contact to ATP.

It belongs to the adenylate kinase family. As to quaternary structure, monomer.

The protein localises to the cytoplasm. It carries out the reaction AMP + ATP = 2 ADP. It functions in the pathway purine metabolism; AMP biosynthesis via salvage pathway; AMP from ADP: step 1/1. Functionally, catalyzes the reversible transfer of the terminal phosphate group between ATP and AMP. Plays an important role in cellular energy homeostasis and in adenine nucleotide metabolism. In Corynebacterium urealyticum (strain ATCC 43042 / DSM 7109), this protein is Adenylate kinase.